The primary structure comprises 424 residues: MLDIKFVRSNPELVLEGLKKRGSDISLDEFLKLDSMRREKLVVAEQLKNTRNVVSQEIGKLKKAGQDAEEKTLEMRKVSQKIKDMDDEIRNIEEKLQEILLSIPNIPHESVPVGKDENDNVEIRRWGKPRGFEFEPKPHWDLGEDLNILDFERGGKVTGARFSFYKGMGARLERALINFMLDLHTREHGYTEIFPPFIVNGDSMLGTGQLPKFAEDMFKLEGLNYYLIPTAEVPVTNLYRDEILAEEQLPIYHCAYSACFRAEAGAAGRDTRGLIRQHQFNKVELVKFSKPEESFDELERLTANAEKILQALGLPYRVVLLSTGDMGFTSAKTYDLEVWLPSYNAYKEISSCSNFLDFQARRANIKYRPTPKSKPEFVHTLNGSGIAVGRALSAILENYQEADGSITVPPVLVPYMGGIERITL.

Residue 230–232 (TAE) participates in L-serine binding. 261 to 263 (RAE) is an ATP binding site. E284 is a binding site for L-serine. Residue 348-351 (EISS) coordinates ATP. S384 provides a ligand contact to L-serine.

This sequence belongs to the class-II aminoacyl-tRNA synthetase family. Type-1 seryl-tRNA synthetase subfamily. As to quaternary structure, homodimer. The tRNA molecule binds across the dimer.

The protein resides in the cytoplasm. It catalyses the reaction tRNA(Ser) + L-serine + ATP = L-seryl-tRNA(Ser) + AMP + diphosphate + H(+). The enzyme catalyses tRNA(Sec) + L-serine + ATP = L-seryl-tRNA(Sec) + AMP + diphosphate + H(+). The protein operates within aminoacyl-tRNA biosynthesis; selenocysteinyl-tRNA(Sec) biosynthesis; L-seryl-tRNA(Sec) from L-serine and tRNA(Sec): step 1/1. Functionally, catalyzes the attachment of serine to tRNA(Ser). Is also able to aminoacylate tRNA(Sec) with serine, to form the misacylated tRNA L-seryl-tRNA(Sec), which will be further converted into selenocysteinyl-tRNA(Sec). This chain is Serine--tRNA ligase, found in Desulforamulus reducens (strain ATCC BAA-1160 / DSM 100696 / MI-1) (Desulfotomaculum reducens).